Consider the following 228-residue polypeptide: MVSFTYLLAAVSAVTGAVAAPNPTKVDAQPPSGLLEKRTSPTTGVNNGFYFSFWTDTPSAVTYTNGNGGQFSMNWNGNRGNHVGGKGWNPGAARTIKYSGDYRPNGNSYLAVYGWTRNPLVEYYIVENFGTYNPSSGAQKKGEINIDGSIYDIAVSTRNCAPSIEGDCKTFQQYWSVRRNKRSSGSVNTGAHFNAWAQAGLRLGSHDYQILAVEGYQSSGQATMTVSG.

Residues 1–19 form the signal peptide; it reads MVSFTYLLAAVSAVTGAVA. Residues 37 to 227 form the GH11 domain; it reads KRTSPTTGVN…SSGQATMTVS (191 aa). Glu122 serves as the catalytic Nucleophile. The active-site Proton donor is the Glu214.

This sequence belongs to the glycosyl hydrolase 11 (cellulase G) family.

It is found in the secreted. It catalyses the reaction Endohydrolysis of (1-&gt;4)-beta-D-xylosidic linkages in xylans.. The protein operates within glycan degradation; xylan degradation. With respect to regulation, inhibited by the proteinaceous endoxylanase inhibitor I from T.aestivum (TAXI-I). Functionally, endo-1,4-beta-xylanase involved in the hydrolysis of xylan, a major structural heterogeneous polysaccharide found in plant biomass representing the second most abundant polysaccharide in the biosphere, after cellulose. Plays an important role in causing fusarium head blight (FHB) on cereal crops. Induces cell death and hydrogen peroxide accumulation in infected wheat leaves. The sequence is that of Endo-1,4-beta-xylanase B (XYLB) from Gibberella zeae (strain ATCC MYA-4620 / CBS 123657 / FGSC 9075 / NRRL 31084 / PH-1) (Wheat head blight fungus).